Here is a 574-residue protein sequence, read N- to C-terminus: Glycine--tRNA ligase (574 aa).

Substrate is bound by residues arginine 96 and glutamate 162. ATP contacts are provided by residues 194-196 (RNE), 204-209 (IRLREF), 327-328 (EC), and 450-453 (GIDR). Position 209–213 (209–213 (FTQAE)) interacts with substrate. 446 to 450 (EPSYG) provides a ligand contact to substrate.

The protein belongs to the class-II aminoacyl-tRNA synthetase family.

The protein resides in the cytoplasm. It carries out the reaction tRNA(Gly) + glycine + ATP = glycyl-tRNA(Gly) + AMP + diphosphate. Functionally, catalyzes the attachment of glycine to tRNA(Gly). This chain is Glycine--tRNA ligase, found in Methanococcus maripaludis (strain C6 / ATCC BAA-1332).